The chain runs to 554 residues: Rab GTPase-binding effector protein 2 (554 aa).

3 disordered regions span residues 1-28 (MAAA…SELS), 167-208 (IQRR…GPAA), and 371-395 (GLRA…DEAL). The span at 14-28 (PQEKQKDASESSELS) shows a compositional bias: basic and acidic residues. A coiled-coil region spans residues 15-173 (QEKQKDASES…IQEIQRRPRQ (159 aa)). A phosphoserine mark is found at Ser176, Ser180, Ser187, and Ser191. Positions 274–509 (DSQWEQLQVE…QAELETSEQV (236 aa)) form a coiled coil.

Belongs to the rabaptin family. As to quaternary structure, heterodimer with RABGEF1. The dimer binds RAB5A that has been activated by GTP-binding. Interacts with SDCCAG8; this interaction is important for ciliogenesis regulation. Interacts with RAB4A; this interaction may mediate VEGFR2 cell surface expression.

The protein resides in the cytoplasm. It is found in the early endosome. It localises to the cytoskeleton. Its subcellular location is the microtubule organizing center. The protein localises to the centrosome. The protein resides in the cilium basal body. In terms of biological role, plays a role in membrane trafficking and in homotypic early endosome fusion. Participates in arteriogenesis by regulating vascular endothelial growth factor receptor 2/VEGFR2 cell surface expression and endosomal trafficking. By interacting with SDCCAG8, localizes to centrosomes and plays a critical role in ciliogenesis. The protein is Rab GTPase-binding effector protein 2 (Rabep2) of Mus musculus (Mouse).